The sequence spans 207 residues: Small ribosomal subunit protein uS4c (207 aa).

Residues 92–150 (MRLDNILFRLGFVPTIPSARQLINHRHILVNNRIVDVPSFHCKPKDIITIGSPKTYQSI) enclose the S4 RNA-binding domain.

It belongs to the universal ribosomal protein uS4 family. As to quaternary structure, part of the 30S ribosomal subunit. Contacts protein S5. The interaction surface between S4 and S5 is involved in control of translational fidelity.

It is found in the plastid. Its subcellular location is the chloroplast. Its function is as follows. One of the primary rRNA binding proteins, it binds directly to 16S rRNA where it nucleates assembly of the body of the 30S subunit. With S5 and S12 plays an important role in translational accuracy. The polypeptide is Small ribosomal subunit protein uS4c (rps4) (Equisetum variegatum (Variegated horsetail)).